The sequence spans 914 residues: Protein translocase subunit SecA (914 aa).

Residues Q86, 104 to 108 (GEGKT), and D512 each bind ATP. Zn(2+)-binding residues include C898, C900, C909, and H910.

The protein belongs to the SecA family. In terms of assembly, monomer and homodimer. Part of the essential Sec protein translocation apparatus which comprises SecA, SecYEG and auxiliary proteins SecDF-YajC and YidC. The cofactor is Zn(2+).

The protein localises to the cell inner membrane. Its subcellular location is the cytoplasm. The enzyme catalyses ATP + H2O + cellular proteinSide 1 = ADP + phosphate + cellular proteinSide 2.. Part of the Sec protein translocase complex. Interacts with the SecYEG preprotein conducting channel. Has a central role in coupling the hydrolysis of ATP to the transfer of proteins into and across the cell membrane, serving both as a receptor for the preprotein-SecB complex and as an ATP-driven molecular motor driving the stepwise translocation of polypeptide chains across the membrane. The protein is Protein translocase subunit SecA of Bordetella petrii (strain ATCC BAA-461 / DSM 12804 / CCUG 43448).